A 205-amino-acid polypeptide reads, in one-letter code: Holliday junction branch migration complex subunit RuvA (205 aa).

The domain I stretch occupies residues 1–64; it reads MIGRLRGLLV…EDAQLLYGFI (64 aa). Residues 65-143 form a domain II region; the sequence is TKQERALFRL…SLMEASAGSE (79 aa). The interval 144 to 156 is flexible linker; that stretch reads REFMLKSNYTPAP. The domain III stretch occupies residues 157-205; it reads VINTAEEDAIAALLSLGYKPAQASKAVSAVYQDGMDSETLIKSSLKSML.

It belongs to the RuvA family. In terms of assembly, homotetramer. Forms an RuvA(8)-RuvB(12)-Holliday junction (HJ) complex. HJ DNA is sandwiched between 2 RuvA tetramers; dsDNA enters through RuvA and exits via RuvB. An RuvB hexamer assembles on each DNA strand where it exits the tetramer. Each RuvB hexamer is contacted by two RuvA subunits (via domain III) on 2 adjacent RuvB subunits; this complex drives branch migration. In the full resolvosome a probable DNA-RuvA(4)-RuvB(12)-RuvC(2) complex forms which resolves the HJ.

It localises to the cytoplasm. Functionally, the RuvA-RuvB-RuvC complex processes Holliday junction (HJ) DNA during genetic recombination and DNA repair, while the RuvA-RuvB complex plays an important role in the rescue of blocked DNA replication forks via replication fork reversal (RFR). RuvA specifically binds to HJ cruciform DNA, conferring on it an open structure. The RuvB hexamer acts as an ATP-dependent pump, pulling dsDNA into and through the RuvAB complex. HJ branch migration allows RuvC to scan DNA until it finds its consensus sequence, where it cleaves and resolves the cruciform DNA. This chain is Holliday junction branch migration complex subunit RuvA, found in Shewanella sediminis (strain HAW-EB3).